The following is a 180-amino-acid chain: Large ribosomal subunit protein uL6c (180 aa).

The protein belongs to the universal ribosomal protein uL6 family. Part of the 50S ribosomal subunit.

The protein resides in the plastid. It localises to the chloroplast. Binds 23S rRNA. The chain is Large ribosomal subunit protein uL6c (rpl6) from Pyropia yezoensis (Susabi-nori).